The sequence spans 213 residues: Uracil phosphoribosyltransferase (213 aa).

5-phospho-alpha-D-ribose 1-diphosphate is bound by residues Arg-78, Arg-103, and 130–138; that span reads DPMLATGGS. Uracil-binding positions include Ile-193 and 198–200; that span reads GDA. Asp-199 contacts 5-phospho-alpha-D-ribose 1-diphosphate.

It belongs to the UPRTase family. Mg(2+) is required as a cofactor.

It catalyses the reaction UMP + diphosphate = 5-phospho-alpha-D-ribose 1-diphosphate + uracil. Its pathway is pyrimidine metabolism; UMP biosynthesis via salvage pathway; UMP from uracil: step 1/1. Its activity is regulated as follows. Allosterically activated by GTP. In terms of biological role, catalyzes the conversion of uracil and 5-phospho-alpha-D-ribose 1-diphosphate (PRPP) to UMP and diphosphate. The polypeptide is Uracil phosphoribosyltransferase (Bordetella bronchiseptica (strain ATCC BAA-588 / NCTC 13252 / RB50) (Alcaligenes bronchisepticus)).